A 248-amino-acid chain; its full sequence is DNA repair protein RecO (248 aa).

It belongs to the RecO family.

Its function is as follows. Involved in DNA repair and RecF pathway recombination. This Streptomyces griseus subsp. griseus (strain JCM 4626 / CBS 651.72 / NBRC 13350 / KCC S-0626 / ISP 5235) protein is DNA repair protein RecO.